The sequence spans 184 residues: Probable chemoreceptor glutamine deamidase CheD (184 aa).

It belongs to the CheD family.

It catalyses the reaction L-glutaminyl-[protein] + H2O = L-glutamyl-[protein] + NH4(+). Functionally, probably deamidates glutamine residues to glutamate on methyl-accepting chemotaxis receptors (MCPs), playing an important role in chemotaxis. The polypeptide is Probable chemoreceptor glutamine deamidase CheD (Rhizobium rhizogenes (strain K84 / ATCC BAA-868) (Agrobacterium radiobacter)).